Reading from the N-terminus, the 684-residue chain is Pescadillo homolog (684 aa).

Residues 284 to 352 (DAAAAEASSN…DSDEEADDEA (69 aa)) are disordered. The span at 285–294 (AAAAEASSNA) shows a compositional bias: low complexity. The segment covering 296–310 (TRKDGKKLSTRDVKR) has biased composition (basic and acidic residues). The span at 342 to 352 (QDSDEEADDEA) shows a compositional bias: acidic residues. Residues 387–486 (PLPMLFSRYV…QILPTDPYRP (100 aa)) enclose the BRCT domain. Disordered regions lie at residues 508 to 580 (GYVP…ALLA) and 612 to 684 (AASL…NKKP). A compositionally biased stretch (acidic residues) spans 528-543 (ADEDEDEDEDEDEDED). Residues 544-570 (KAGSGRGDDKNVAAREQDAVEKHDKTP) show a composition bias toward basic and acidic residues. Over residues 612 to 624 (AASLKSHKKKKRT) the composition is skewed to basic residues. The span at 663–675 (KKKEEKMRLEAKK) shows a compositional bias: basic and acidic residues.

It belongs to the pescadillo family. As to quaternary structure, component of the NOP7 complex, composed of ERB1, NOP7 and YTM1. The complex is held together by ERB1, which interacts with NOP7 via its N-terminal domain and with YTM1 via a high-affinity interaction between the seven-bladed beta-propeller domains of the 2 proteins. The NOP7 complex associates with the 66S pre-ribosome.

The protein resides in the nucleus. The protein localises to the nucleolus. It is found in the nucleoplasm. In terms of biological role, component of the NOP7 complex, which is required for maturation of the 25S and 5.8S ribosomal RNAs and formation of the 60S ribosome. The sequence is that of Pescadillo homolog from Malassezia globosa (strain ATCC MYA-4612 / CBS 7966) (Dandruff-associated fungus).